The chain runs to 269 residues: GTP cyclohydrolase FolE2 (269 aa).

It belongs to the GTP cyclohydrolase IV family.

It catalyses the reaction GTP + H2O = 7,8-dihydroneopterin 3'-triphosphate + formate + H(+). The protein operates within cofactor biosynthesis; 7,8-dihydroneopterin triphosphate biosynthesis; 7,8-dihydroneopterin triphosphate from GTP: step 1/1. Converts GTP to 7,8-dihydroneopterin triphosphate. This Burkholderia thailandensis (strain ATCC 700388 / DSM 13276 / CCUG 48851 / CIP 106301 / E264) protein is GTP cyclohydrolase FolE2.